The chain runs to 603 residues: Probable L-gulonolactone oxidase 6 (603 aa).

Positions 1 to 35 (MAFTSSPSYGSLNAAFWRTIFVVHCISTLVFTTIS) are cleaved as a signal peptide. Residues 64 to 246 (STCRAANVAY…SQVTLKLQPM (183 aa)) form the FAD-binding PCMH-type domain.

The protein belongs to the oxygen-dependent FAD-linked oxidoreductase family. The cofactor is FAD.

It catalyses the reaction L-gulono-1,4-lactone + O2 = L-ascorbate + H2O2 + H(+). It functions in the pathway cofactor biosynthesis; L-ascorbate biosynthesis. In terms of biological role, may be involved in the biosynthesis of ascorbic acid. The chain is Probable L-gulonolactone oxidase 6 from Arabidopsis thaliana (Mouse-ear cress).